Reading from the N-terminus, the 436-residue chain is Hydroxycinnamoyltransferase (436 aa).

Residues histidine 154 and aspartate 383 each act as proton acceptor in the active site.

The protein belongs to the plant acyltransferase family. In terms of tissue distribution, mostly expressed in stems, and, to a lower extent, in bulbs.

The protein operates within phenylpropanoid metabolism. Functionally, hydroxycinnamoyl transferase that catalyzes the transfer of an acyl from p-coumaryol-CoA to various acyl acceptors. Can use feruloyl-CoA and caffeoyl-CoA as acyl donors. This is Hydroxycinnamoyltransferase from Narcissus pseudonarcissus (Daffodil).